Here is a 188-residue protein sequence, read N- to C-terminus: Guanylate kinase (188 aa).

The Guanylate kinase-like domain occupies 4 to 183; the sequence is RNIVVLTAPS…AVEETLTRIR (180 aa). 11–18 is a binding site for ATP; sequence APSGAGKT.

This sequence belongs to the guanylate kinase family.

Its subcellular location is the cytoplasm. The enzyme catalyses GMP + ATP = GDP + ADP. Functionally, essential for recycling GMP and indirectly, cGMP. The protein is Guanylate kinase of Salinibacter ruber (strain DSM 13855 / M31).